The sequence spans 399 residues: MELNALIKKIESVDSYAREFLKKFEIKQEKGKFLFIAPGEDYREWLETIVNTFLEEEVRKLIEVKEKEEKKKVEIKDFLNPKYTLENFIVGEGNRLAYEVVKEALENLGSLYNPIFIYGSVGTGKTHLLQAAGNEAKKRGYRVIYSSADDFAQAMVEHLKKGTINEFRNMYKSVDLLLLDDVQFLSGKERTQIEFFHIFNTLYLLEKQIILASDRHPQKLDGVSDRLVSRFEGGILVEIELDNKTRFKIIKEKLKEFNLELRKEVIDYLLENTKNVREIEGKIKLIKLKGFEGLERKERKERDKLMQIVEFVANYYAVKVEDILSDKRNKRTSEARKIAMYLCRKVCSASLIEIARAFKRKDHTTVIHAIRSVEEEKKKDRKFKHLVGFLEKQAFDKIC.

The interval 1 to 64 (MELNALIKKI…EEEVRKLIEV (64 aa)) is domain I, interacts with DnaA modulators. Residues 64 to 77 (VKEKEEKKKVEIKD) form a domain II region. Residues 78 to 290 (FLNPKYTLEN…GKIKLIKLKG (213 aa)) are domain III, AAA+ region. Residues Ile-89, Asn-94, Gly-122, Thr-123, Gly-124, Lys-125, Thr-126, and His-127 each contribute to the ADP site. Ile-89 is a binding site for ATP. Gly-122 lines the ATP pocket. Residues Gly-124, Lys-125, Thr-126, and His-127 each coordinate ATP. Mg(2+) is bound at residue Thr-126. Val-156 is a binding site for ssDNA. Residue Asp-180 participates in ATP binding. Asp-181 serves as a coordination point for Mg(2+). The ssDNA site is built by Lys-188, Arg-190, and Thr-191. Arg-277 contacts ATP. A domain IV, binds dsDNA region spans residues 291–399 (FEGLERKERK…LEKQAFDKIC (109 aa)).

Belongs to the DnaA family. In terms of assembly, in the presence of ATP analog AMP-PCP forms a linear, right-handed spiral filament with 4 subunits arranged head-to-tail, about 122 Angstroms wide and about 360 Angstroms long. Mg(2+)-AMP-PCP binds at the subunit interface with the gamma phosphate coordinated by adjacent subunits. dsDNA probably wraps on the outside of the filament. ssDNA binds to the center of the helical filament via the AAA+ domain, which stretches the DNA.

It is found in the cytoplasm. Plays an essential role in the initiation and regulation of chromosomal replication. ATP-DnaA binds to the origin of replication (oriC) to initiate formation of the DNA replication initiation complex once per cell cycle. Binds the DnaA box (a 9 base pair repeat at the origin) and separates the double-stranded (ds)DNA. Forms a right-handed helical filament on oriC DNA; dsDNA binds to the exterior of the filament while single-stranded (ss)DNA is stabiized in the filament's interior. The ATP-DnaA-oriC complex binds and stabilizes one strand of the AT-rich DNA unwinding element (DUE), permitting loading of DNA polymerase. After initiation quickly degrades to an ADP-DnaA complex that is not apt for DNA replication. Binds acidic phospholipids. Its function is as follows. Able to melt short unstable dsDNA (15-mer with melting temperature, TM, 43 degrees Celsius) in the presence of a non-hydrolyzable ATP analog; a more stable dsDNA (20-mer, TM 55 degrees Celsius) is poor substrate. ADP does not support dsDNA melting. Addition of DnaA-AMP-PCP (an ATP analog, beta,gamma-methyleneadenosine 5'-triphosphate) to an oric-containing plasmid causes a DNA shift to more positively supercoiled topological species, stabilizing a positive wrap and right-handed filament as seen in the crystal structure without DNA. Filament formation generated by positive supercoiling may destabilize the origin unwinding element through compensatory negative supercoiling strain. This chain is Chromosomal replication initiator protein DnaA, found in Aquifex aeolicus (strain VF5).